Reading from the N-terminus, the 164-residue chain is SsrA-binding protein (164 aa).

The protein belongs to the SmpB family.

The protein resides in the cytoplasm. Its function is as follows. Required for rescue of stalled ribosomes mediated by trans-translation. Binds to transfer-messenger RNA (tmRNA), required for stable association of tmRNA with ribosomes. tmRNA and SmpB together mimic tRNA shape, replacing the anticodon stem-loop with SmpB. tmRNA is encoded by the ssrA gene; the 2 termini fold to resemble tRNA(Ala) and it encodes a 'tag peptide', a short internal open reading frame. During trans-translation Ala-aminoacylated tmRNA acts like a tRNA, entering the A-site of stalled ribosomes, displacing the stalled mRNA. The ribosome then switches to translate the ORF on the tmRNA; the nascent peptide is terminated with the 'tag peptide' encoded by the tmRNA and targeted for degradation. The ribosome is freed to recommence translation, which seems to be the essential function of trans-translation. This is SsrA-binding protein from Shewanella woodyi (strain ATCC 51908 / MS32).